Here is a 258-residue protein sequence, read N- to C-terminus: UPF0246 protein YaaA (258 aa).

Belongs to the UPF0246 family.

The sequence is that of UPF0246 protein YaaA from Shigella boydii serotype 18 (strain CDC 3083-94 / BS512).